The following is a 692-amino-acid chain: Methionine--tRNA ligase (692 aa).

Positions 12-22 match the 'HIGH' region motif; the sequence is PYANGSFHIGH. The Zn(2+) site is built by cysteine 143, cysteine 146, cysteine 156, and cysteine 159. Residues 341–345 carry the 'KMSKS' region motif; sequence KMSKS. Lysine 344 contributes to the ATP binding site. A tRNA-binding domain is found at 586–692; sequence DFAKIDLRIA…PGAQPGMRVR (107 aa).

It belongs to the class-I aminoacyl-tRNA synthetase family. MetG type 1 subfamily. As to quaternary structure, homodimer. Zn(2+) is required as a cofactor.

It localises to the cytoplasm. The enzyme catalyses tRNA(Met) + L-methionine + ATP = L-methionyl-tRNA(Met) + AMP + diphosphate. Its function is as follows. Is required not only for elongation of protein synthesis but also for the initiation of all mRNA translation through initiator tRNA(fMet) aminoacylation. The protein is Methionine--tRNA ligase of Bordetella parapertussis (strain 12822 / ATCC BAA-587 / NCTC 13253).